The chain runs to 755 residues: Dynamin-1-like protein (755 aa).

N-acetylmethionine is present on Met-1. The Dynamin-type G domain occupies 22–315; the sequence is IIQLPQIVVV…LMHHIRDCLP (294 aa). The interval 32–39 is G1 motif; the sequence is GTQSSGKS. 32 to 40 contributes to the GTP binding site; the sequence is GTQSSGKSS. Positions 58–60 are G2 motif; the sequence is VTR. A G3 motif region spans residues 159 to 162; that stretch reads DLPG. The tract at residues 228-231 is G4 motif; that stretch reads TKLD. Residues 228–234 and 259–262 each bind GTP; these read TKLDLMD and NRSQ. The G5 motif stretch occupies residues 258–261; sequence VNRS. A middle domain region spans residues 357–502; sequence YCNTIEGTAK…NEMVHNLVAI (146 aa). The interval 461 to 704 is interaction with GSK3B; sequence NYSTQELLRF…NHVKDTLQSE (244 aa). The interval 515–582 is b domain; it reads ADACGLMNNN…IQDNRRETKN (68 aa). Positions 536–610 are disordered; sequence ELPSAVSRDK…QEPTTGNWRG (75 aa). A Phosphoserine modification is found at Ser-542. Glycyl lysine isopeptide (Lys-Gly) (interchain with G-Cter in SUMO) cross-links involve residues Lys-545 and Lys-548. Residues 550–567 are compositionally biased toward low complexity; the sequence is PSALAPASQEPSPAASAE. Phosphoserine is present on Ser-561. A compositionally biased stretch (basic and acidic residues) spans 568–581; it reads ADGKLIQDNRRETK. Residues Lys-571 and Lys-581 each participate in a glycyl lysine isopeptide (Lys-Gly) (interchain with G-Cter in SUMO) cross-link. A compositionally biased stretch (gly residues) spans 586–600; that stretch reads AGGGIGDGGRIGDGG. Thr-604 and Thr-605 each carry an O-linked (GlcNAc) threonine glycan. Residue Lys-613 forms a Glycyl lysine isopeptide (Lys-Gly) (interchain with G-Cter in SUMO) linkage. The residue at position 616 (Lys-616) is an N6-acetyllysine; alternate. Lys-616 participates in a covalent cross-link: Glycyl lysine isopeptide (Lys-Gly) (interchain with G-Cter in SUMO); alternate. Lys-625 participates in a covalent cross-link: Glycyl lysine isopeptide (Lys-Gly) (interchain with G-Cter in SUMO). Position 626 is a phosphoserine (Ser-626). Lys-627 participates in a covalent cross-link: Glycyl lysine isopeptide (Lys-Gly) (interchain with G-Cter in SUMO). Ser-635 carries the phosphoserine; by CDK1 modification. Ser-656 bears the Phosphoserine; by CAMK1 and PKA mark. Cys-663 carries the post-translational modification S-nitrosocysteine. Residues 663–754 form the GED domain; that stretch reads CEVIERLIKS…IIAEIRETHL (92 aa). The important for homodimerization stretch occupies residues 673-687; that stretch reads YFLIVRKNIQDSVPK.

Belongs to the TRAFAC class dynamin-like GTPase superfamily. Dynamin/Fzo/YdjA family. Homotetramer; dimerizes through the N-terminal GTP-middle region of one molecule binding to the GED domain of another DNM1L molecule. Oligomerizes in a GTP-dependent manner to form membrane-associated tubules with a spiral pattern. Interacts with GSK3B and MARCHF5. Interacts (via the GTPase and B domains) with UBE2I; the interaction promotes sumoylation of DNM1L, mainly in its B domain. Interacts with PPP3CA; the interaction dephosphorylates DNM1L and regulates its transition to mitochondria. Interacts with BCL2L1 isoform BCL-X(L) and CLTA; DNM1L and BCL2L1 isoform BCL-X(L) may form a complex in synaptic vesicles that also contains clathrin and MFF. Interacts with MFF; the interaction is inhinited by C11orf65/MFI. Interacts with FIS1. Interacts with MIEF2 and MIEF1; GTP-dependent this regulates GTP hydrolysis and DNM1L oligomerization. Interacts with PGAM5; this interaction leads to dephosphorylation at Ser-656 and activation of GTPase activity and eventually to mitochondria fragmentation. Interacts with RALBP1; during mitosis, recruits DNM1L to the mitochondrion and mediates its activation by the mitotic kinase cyclin B-CDK1. Interacts with FUNDC1; this interaction recruits DNM1L/DRP1 at ER-mitochondria contact sites. Phosphorylation/dephosphorylation events on two sites near the GED domain regulate mitochondrial fission. Phosphorylation on Ser-656 by CAMK1 and PKA inhibits the GTPase activity, leading to a defect in mitochondrial fission promoting mitochondrial elongation. Dephosphorylated on this site by PPP3CA which promotes mitochondrial fission. Phosphorylation on Ser-635 by PINK1 activates the GTPase activity and promotes mitochondrial fission. Phosphorylation on Ser-635 by CDK1 also promotes mitochondrial fission. Phosphorylated in a circadian manner at Ser-656. Dephosphorylated by PGAM5. In terms of processing, sumoylated on various lysine residues within the B domain, probably by MUL1. Sumoylation positively regulates mitochondrial fission. Desumoylated by SENP5 during G2/M transition of mitosis. Appears to be linked to its catalytic activity. Post-translationally, S-nitrosylation increases DNM1L dimerization, mitochondrial fission and causes neuronal damage. O-GlcNAcylation augments the level of the GTP-bound active form of DNM1L and induces translocation from the cytoplasm to mitochondria in cardiomyocytes. It also decreases phosphorylation at Ser-656. In terms of processing, ubiquitination by MARCHF5 affects mitochondrial morphology. As to expression, expressed in all tissues tested (at protein level). Longer isoforms are preferentially expressed in brain.

The protein resides in the cytoplasm. Its subcellular location is the cytosol. The protein localises to the golgi apparatus. It is found in the endomembrane system. It localises to the mitochondrion outer membrane. The protein resides in the peroxisome. Its subcellular location is the membrane. The protein localises to the clathrin-coated pit. It is found in the cytoplasmic vesicle. It localises to the secretory vesicle. The protein resides in the synaptic vesicle membrane. The catalysed reaction is GTP + H2O = GDP + phosphate + H(+). Functionally, functions in mitochondrial and peroxisomal division. Mediates membrane fission through oligomerization into membrane-associated tubular structures that wrap around the scission site to constrict and sever the mitochondrial membrane through a GTP hydrolysis-dependent mechanism. The specific recruitment at scission sites is mediated by membrane receptors like MFF, MIEF1 and MIEF2 for mitochondrial membranes. While the recruitment by the membrane receptors is GTP-dependent, the following hydrolysis of GTP induces the dissociation from the receptors and allows DNM1L filaments to curl into closed rings that are probably sufficient to sever a double membrane. Acts downstream of PINK1 to promote mitochondrial fission in a PRKN-dependent manner. Plays an important role in mitochondrial fission during mitosis. Through its function in mitochondrial division, ensures the survival of at least some types of postmitotic neurons, including Purkinje cells, by suppressing oxidative damage. Required for normal brain development, including that of cerebellum. Facilitates developmentally regulated apoptosis during neural tube formation. Required for a normal rate of cytochrome c release and caspase activation during apoptosis; this requirement may depend upon the cell type and the physiological apoptotic cues. Required for formation of endocytic vesicles. Proposed to regulate synaptic vesicle membrane dynamics through association with BCL2L1 isoform Bcl-X(L) which stimulates its GTPase activity in synaptic vesicles; the function may require its recruitment by MFF to clathrin-containing vesicles. Required for programmed necrosis execution. Rhythmic control of its activity following phosphorylation at Ser-656 is essential for the circadian control of mitochondrial ATP production. In Rattus norvegicus (Rat), this protein is Dynamin-1-like protein.